Here is a 320-residue protein sequence, read N- to C-terminus: Formimidoylglutamase (320 aa).

Mn(2+) contacts are provided by His125, Asp153, His155, Asp157, Asp244, and Asp246.

This sequence belongs to the arginase family. It depends on Mn(2+) as a cofactor.

It carries out the reaction N-formimidoyl-L-glutamate + H2O = formamide + L-glutamate. It participates in amino-acid degradation; L-histidine degradation into L-glutamate; L-glutamate from N-formimidoyl-L-glutamate (hydrolase route): step 1/1. Catalyzes the conversion of N-formimidoyl-L-glutamate to L-glutamate and formamide. The polypeptide is Formimidoylglutamase (Rhodococcus jostii (strain RHA1)).